A 1481-amino-acid polypeptide reads, in one-letter code: Cystic fibrosis transmembrane conductance regulator (1481 aa).

Residues 1–77 (MQRSPLEKAS…KLINALRRCF (77 aa)) are Cytoplasmic-facing. Residues 78–98 (FWRFMFYGILLYLGEVTKAVQ) form a helical membrane-spanning segment. The region spanning 81-365 (FMFYGILLYL…WAVQTWYDSL (285 aa)) is the ABC transmembrane type-1 1 domain. At 99-122 (PLLLGRIIASYDPDNKEERSIAIY) the chain is on the extracellular side. The helical transmembrane segment at 123–146 (LGIGLCLLFIVRTLLLHPAIFGLH) threads the bilayer. Over 147-195 (HIGMQMRIAMFSLIYKKTLKLSSRVLDKISIGQLVSLLSNNLNKFDEGL) the chain is Cytoplasmic. The helical transmembrane segment at 196 to 216 (ALAHFVWIVPLQVALLMGLIW) threads the bilayer. Residues 217 to 222 (ELLQAS) lie on the Extracellular side of the membrane. A helical transmembrane segment spans residues 223–243 (AFCGLGFLIVLALFQAGLGRM). The Cytoplasmic segment spans residues 244–298 (MMKYRDQRAGKINERLVITSEMIENIQSVKAYCWEEAMEKMIENLRQTELKLTRK). A helical membrane pass occupies residues 299–319 (AAYVRYFNSSAFFFSGFFVVF). The Extracellular portion of the chain corresponds to 320-339 (LSVLPYALIKGIVLRKIFTT). Residues 340–358 (ISFCIVLRMAVTRQFPWAV) form a helical membrane-spanning segment. The Cytoplasmic segment spans residues 359–858 (QTWYDSLGAI…YLRYITVHKS (500 aa)). ATP is bound by residues Trp-401, Ser-434, 458-465 (GSTGAGKT), and Gln-493. In terms of domain architecture, ABC transporter 1 spans 423-646 (NDDDSLFFSN…RPDFSSKLMG (224 aa)). Cys-524 carries the S-palmitoyl cysteine lipid modification. Phosphoserine is present on residues Ser-549 and Ser-660. The tract at residues 654-831 (SAERRNSILT…EEINEEDLKE (178 aa)) is disordered R region. Residue Ser-670 is modified to Phosphoserine; by PKA. Ser-686 carries the phosphoserine modification. A Glycyl lysine isopeptide (Lys-Gly) (interchain with G-Cter in ubiquitin) cross-link involves residue Lys-688. Phosphoserine is present on residues Ser-700 and Ser-712. Thr-717 carries the post-translational modification Phosphothreonine. Phosphoserine occurs at positions 737, 753, 768, 790, 795, and 813. Residues 859-879 (LIFVLIWCLVIFLAEVAASLV) form a helical membrane-spanning segment. One can recognise an ABC transmembrane type-1 2 domain in the interval 859–1155 (LIFVLIWCLV…AVNSSIDVDS (297 aa)). At 880–918 (VLWFLGNTPPQDKGNSTYSRNNSYAVIITRTSSYYVFYI) the chain is on the extracellular side. Asn-894 and Asn-900 each carry an N-linked (GlcNAc...) asparagine glycan. A discontinuously helical membrane pass occupies residues 919–939 (YVGVADTLLAMGFFRGLPLVH). The Cytoplasmic segment spans residues 940 to 990 (TLITVSKILHHKMLHSVLQAPMSTLNTLKAGGILNRFSKDIAILDDLLPLT). Residues 991-1011 (IFDFIQLLLIVIGAIAVVAVL) form a helical membrane-spanning segment. The Extracellular portion of the chain corresponds to 1012-1013 (QP). Residues 1014-1034 (YIFVATVPVIVAFIMLRAYFL) traverse the membrane as a helical segment. The Cytoplasmic portion of the chain corresponds to 1035-1095 (QTSQQLKQLE…TANWFLYLST (61 aa)). A helical transmembrane segment spans residues 1096–1116 (LRWFQMRIEMIFVIFFIAVTF). Over 1117-1130 (ISILTTGEGEGTVG) the chain is Extracellular. A helical transmembrane segment spans residues 1131–1151 (IILTLAMNIMSTLQWAVNSSI). Residues 1152–1481 (DVDSLMRSVS…TEEEVQDTRL (330 aa)) lie on the Cytoplasmic side of the membrane. The 234-residue stretch at 1211–1444 (MTVKDLTAKY…RSLFRQAISP (234 aa)) folds into the ABC transporter 2 domain. Residues Tyr-1220 and 1245 to 1252 (GRTGSGKS) each bind ATP. Residues 1387–1481 (RTLKQAFADC…TEEEVQDTRL (95 aa)) form an interaction with GORASP2 region. Cys-1396 carries S-palmitoyl cysteine lipidation. Residues Ser-1445 and Ser-1457 each carry the phosphoserine modification. Positions 1479 to 1481 (TRL) match the PDZ-binding motif.

The protein belongs to the ABC transporter superfamily. ABCC family. CFTR transporter (TC 3.A.1.202) subfamily. As to quaternary structure, monomer; does not require oligomerization for channel activity. May form oligomers in the membrane. Interacts with SLC26A3, SLC26A6 and NHERF1. Interacts with SHANK2. Interacts with MYO6. Interacts (via C-terminus) with GOPC (via PDZ domain); this promotes CFTR internalization and thereby decreases channel activity. Interacts with SLC4A7 through NHERF1. Found in a complex with MYO5B and RAB11A. Interacts with ANO1. Interacts with SLC26A8. Interacts with AHCYL1; the interaction increases CFTR activity. Interacts with CSE1L. The core-glycosylated form interacts with GORASP2 (via PDZ GRASP-type 1 domain) in respone to ER stress. Interacts with MARCHF2; the interaction leads to CFTR ubiqtuitination and degradation. Interacts with ADGRG2. In terms of processing, N-glycosylated. Post-translationally, phosphorylated; cAMP treatment promotes phosphorylation and activates the channel. Dephosphorylation decreases the ATPase activity (in vitro). Phosphorylation at PKA sites activates the channel. Phosphorylation at PKC sites enhances the response to phosphorylation by PKA. Phosphorylated by AMPK; this inhibits channel activity. Ubiquitinated, leading to its degradation in the lysosome. Deubiquitination by USP10 in early endosomes enhances its endocytic recycling to the cell membrane. Ubiquitinated by RNF185 during ER stress. Ubiquitinated by MARCHF2.

It localises to the apical cell membrane. It is found in the early endosome membrane. The protein resides in the cell membrane. Its subcellular location is the recycling endosome membrane. The protein localises to the endoplasmic reticulum membrane. It localises to the nucleus. The enzyme catalyses ATP + H2O + closed Cl(-) channel = ADP + phosphate + open Cl(-) channel.. It carries out the reaction chloride(in) = chloride(out). The catalysed reaction is hydrogencarbonate(in) = hydrogencarbonate(out). It catalyses the reaction ATP + H2O = ADP + phosphate + H(+). Epithelial ion channel that plays an important role in the regulation of epithelial ion and water transport and fluid homeostasis. Mediates the transport of chloride ions across the cell membrane. Possesses an intrinsic ATPase activity and utilizes ATP to gate its channel; the passive flow of anions through the channel is gated by cycles of ATP binding and hydrolysis by the ATP-binding domains. The ion channel is also permeable to HCO(3)(-); selectivity depends on the extracellular chloride concentration. Exerts its function also by modulating the activity of other ion channels and transporters. Contributes to the regulation of the pH and the ion content of the epithelial fluid layer. Modulates the activity of the epithelial sodium channel (ENaC) complex, in part by regulating the cell surface expression of the ENaC complex. May regulate bicarbonate secretion and salvage in epithelial cells by regulating the transporter SLC4A7. Can inhibit the chloride channel activity of ANO1. Plays a role in the chloride and bicarbonate homeostasis during sperm epididymal maturation and capacitation. This Macaca fascicularis (Crab-eating macaque) protein is Cystic fibrosis transmembrane conductance regulator.